The primary structure comprises 587 residues: MVTAAMLLQCCPVPARGPTSLLGKVVKTHQFLFGIGRCPILATQGPNCSQIHLKATKAGGDSPSWAKGHCPFMLSELQDGKSKIVQKAAPEVQEDVKAFKTDLPSSLVSASLKKPFSSPQEQEQISGKVTHLIQDNMPGNYVFSYDQFFRDKIMEKKQDHTYRVFKTVNRWADAYPFAQHFSEASVASKDVSVWCSNDYLGMSRHPQVLRATQETLQRHGAGAGGTRNISGTSKFHVELEQELAELHQKDSALLFSSCFVANDSTLFTLAKILPGCEIYSDAGNHASMIQGIRNSGAAKFVFRHNDPDHLKKLLEKSNPKIPKIVAFEAVHSMDGAICPLEELCDVSHQYGALTFVDEVHAVGLYGSRGAGIGERDGIMHKIDIISGTLGKAFGCVGGYIASTRDLVDMVRSYAAGFIFTTSLPPMVLSGALESVRLLKGEEGQALRRAHQRNVKHMRQLLMDRGLPVIPCPSHIIPIRVGNAALNSKLCDLLLSKHGIYVQAINYPTVPRGEELLRLAPSPHHSPQMMEDFVEKLLLAWTEVGLPLQDVSVAACNFCRRPVHFELMSEWERSYFGNMGPQYVTTYA.

A mitochondrion-targeting transit peptide spans 1–49 (MVTAAMLLQCCPVPARGPTSLLGKVVKTHQFLFGIGRCPILATQGPNCS). Succinyl-CoA is bound at residue Arg-163. Positions 258 and 259 each coordinate pyridoxal 5'-phosphate. Positions 280 and 299 each coordinate succinyl-CoA. Residues Ser-332, His-360, and Thr-388 each coordinate pyridoxal 5'-phosphate. Lys-391 is an active-site residue. Lys-391 bears the N6-(pyridoxal phosphate)lysine mark. Residues Thr-420 and Thr-421 each contribute to the pyridoxal 5'-phosphate site. Thr-508 contributes to the succinyl-CoA binding site.

This sequence belongs to the class-II pyridoxal-phosphate-dependent aminotransferase family. As to quaternary structure, homodimer. Interacts with SUCLA2. It depends on pyridoxal 5'-phosphate as a cofactor.

It is found in the mitochondrion inner membrane. The catalysed reaction is succinyl-CoA + glycine + H(+) = 5-aminolevulinate + CO2 + CoA. It functions in the pathway porphyrin-containing compound metabolism; protoporphyrin-IX biosynthesis; 5-aminolevulinate from glycine: step 1/1. Its function is as follows. Catalyzes the pyridoxal 5'-phosphate (PLP)-dependent condensation of succinyl-CoA and glycine to form aminolevulinic acid (ALA), with CoA and CO2 as by-products. Contributes significantly to heme formation during erythropoiesis. This is 5-aminolevulinate synthase, erythroid-specific, mitochondrial (ALAS2) from Pongo abelii (Sumatran orangutan).